Reading from the N-terminus, the 140-residue chain is ATP synthase epsilon chain (140 aa).

It belongs to the ATPase epsilon chain family. In terms of assembly, F-type ATPases have 2 components, CF(1) - the catalytic core - and CF(0) - the membrane proton channel. CF(1) has five subunits: alpha(3), beta(3), gamma(1), delta(1), epsilon(1). CF(0) has three main subunits: a, b and c.

The protein resides in the cell inner membrane. Its function is as follows. Produces ATP from ADP in the presence of a proton gradient across the membrane. The protein is ATP synthase epsilon chain of Chromobacterium violaceum (strain ATCC 12472 / DSM 30191 / JCM 1249 / CCUG 213 / NBRC 12614 / NCIMB 9131 / NCTC 9757 / MK).